The chain runs to 1247 residues: Structural polyprotein (1247 aa).

Residues 36–67 (RPAGQLAQLISAVSRLALRTVPQKPRRTRKIK) form a host transcription inhibition region. Positions 53-103 (LRTVPQKPRRTRKIKKQKQVKQEQQSTRNQKKKAPKQKQTQKKKRPGRRER) are disordered. 2 stretches are compositionally biased toward basic residues: residues 59 to 71 (KPRR…KQKQ) and 81 to 100 (NQKK…RPGR). The Nuclear localization signal motif lies at 60 to 98 (PRRTRKIKKQKQVKQEQQSTRNQKKKAPKQKQTQKKKRP). The binding to the viral RNA stretch occupies residues 83–113 (KKKAPKQKQTQKKKRPGRRERMCMKIENDCI). Residues 98-112 (PGRRERMCMKIENDC) are ribosome-binding. C112 and C127 are oxidised to a cystine. Residues 112 to 260 (CIFEVKHEGK…KITPEGSVEW (149 aa)) form the Peptidase S3 domain. H138 functions as the Charge relay system in the catalytic mechanism. A Nuclear export signal motif is present at residues 143–153 (IDNADLAKLAF). The tract at residues 154–159 (KRSSKY) is interaction with spike glycoprotein E2. D160 acts as the Charge relay system in catalysis. The segment at 182-192 (PEGYYNWHHGA) is dimerization of the capsid protein. S212 (charge relay system) is an active-site residue. The interval 218 to 222 (DNKGR) is dimerization of the capsid protein. A functions as an uncleaved signal peptide for the precursor of protein E3/E2 region spans residues 261-273 (SLALPVMCLLANT). Cystine bridges form between C268-C277, C282-C286, C285-C317, C343-C449, C346-C352, C415-C429, C477-C590, C525-C549, and C527-C544. N-linked (GlcNAc...) asparagine; by host glycosylation is present at N272. Topologically, residues 325–691 (NARENFNVYK…YYYELYPTTT (367 aa)) are extracellular. N-linked (GlcNAc...) asparagine; by host glycosylation is present at N587. Residues 692-712 (IAVLAAASIVVASLVGLSLGM) form a helical membrane-spanning segment. Residues 713 to 747 (CICARRRCITPYELTPGATIPFLLGILCCVKTAKA) lie on the Cytoplasmic side of the membrane. The interaction with the capsid protein stretch occupies residues 715-719 (CARRR). S-palmitoyl cysteine; by host attachment occurs at residues C720, C740, and C741. The interval 720–740 (CITPYELTPGATIPFLLGILC) is transient transmembrane before p62-6K protein processing. C720 and C741 form a disulfide bridge. Residues 748–762 (ASYYEAATYLWNEQQ) lie on the Extracellular side of the membrane. A helical membrane pass occupies residues 763 to 783 (PLFWLQLLIPLSAAIVVCNCL). Topologically, residues 784 to 787 (KLLP) are cytoplasmic. Residues 788 to 808 (CCCKTLTFLAVMSIGARTVSA) form a helical membrane-spanning segment. The Extracellular portion of the chain corresponds to 809-1223 (YEHATVIPNT…AMSWVQKITG (415 aa)). Cystine bridges form between C857/C922, C870/C902, C871/C904, and C876/C886. The E1 fusion peptide loop stretch occupies residues 892-909 (VYPFMWGGAYCFCDAENT). N-linked (GlcNAc...) asparagine; by host glycosylation is found at N949 and N1078. Disulfide bonds link C1067–C1079, C1109–C1184, C1114–C1188, and C1136–C1178. Residues 1224–1244 (GVGLVVAIAALILIIVLCVSF) traverse the membrane as a helical segment. A lipid anchor (S-palmitoyl cysteine; by host) is attached at C1241. The Cytoplasmic portion of the chain corresponds to 1245–1247 (SRH).

In terms of assembly, homodimer. Homomultimer. Interacts with host karyopherin KPNA4; this interaction allows the nuclear import of the viral capsid protein. Interacts with spike glycoprotein E2. Interacts with host IRAK1; the interaction leads to inhibition of IRAK1-dependent signaling. The precursor of protein E3/E2 and E1 form a heterodimer shortly after synthesis. As to quaternary structure, the precursor of protein E3/E2 and E1 form a heterodimer shortly after synthesis. Processing of the precursor of protein E3/E2 into E2 and E3 results in a heterodimer of the spike glycoproteins E2 and E1. Spike at virion surface are constituted of three E2-E1 heterodimers. After target cell attachment and endocytosis, E1 change conformation to form homotrimers. Interacts with 6K protein. In terms of assembly, interacts with spike glycoprotein E1. Processing of the precursor of protein E3/E2 into E2 and E3 results in a heterodimer of the spike glycoproteins E2 and E1. Spike at virion surface are constituted of a trimer of E2-E1 heterodimers. Interacts with 6K protein. Interacts with host MXRA8; this interaction mediates virus entry. Oligomer. Interacts with spike glycoprotein E1. Interacts with spike glycoprotein E2. In terms of processing, structural polyprotein: Specific enzymatic cleavages in vivo yield mature proteins. Capsid protein is auto-cleaved during polyprotein translation, unmasking a signal peptide at the N-terminus of the precursor of E3/E2. The remaining polyprotein is then targeted to the host endoplasmic reticulum, where host signal peptidase cleaves it into pE2, 6K and E1 proteins. pE2 is further processed to mature E3 and E2 by host furin in trans-Golgi vesicle. Post-translationally, palmitoylated via thioester bonds. These palmitoylations may induce disruption of the C-terminus transmembrane. This would result in the reorientation of E2 C-terminus from lumenal to cytoplasmic side. N-glycosylated. In terms of processing, palmitoylated via thioester bonds.

The protein resides in the virion. It is found in the host cytoplasm. The protein localises to the host cell membrane. It localises to the host nucleus. Its subcellular location is the virion membrane. The protein resides in the host Golgi apparatus. It is found in the host trans-Golgi network. The protein localises to the host endoplasmic reticulum. It catalyses the reaction Autocatalytic release of the core protein from the N-terminus of the togavirus structural polyprotein by hydrolysis of a -Trp-|-Ser- bond.. In terms of biological role, forms an icosahedral capsid with a T=4 symmetry composed of 240 copies of the capsid protein surrounded by a lipid membrane through which penetrate 80 spikes composed of trimers of E1-E2 heterodimers. The capsid protein binds to the viral RNA genome at a site adjacent to a ribosome binding site for viral genome translation following genome release. Possesses a protease activity that results in its autocatalytic cleavage from the nascent structural protein. Following its self-cleavage, the capsid protein transiently associates with ribosomes, and within several minutes the protein binds to viral RNA and rapidly assembles into icosahedric core particles. The resulting nucleocapsid eventually associates with the cytoplasmic domain of the spike glycoprotein E2 at the cell membrane, leading to budding and formation of mature virions. In case of infection, new virions attach to target cells and after clathrin-mediated endocytosis their membrane fuses with the host endosomal membrane. This leads to the release of the nucleocapsid into the cytoplasm, followed by an uncoating event necessary for the genomic RNA to become accessible. The uncoating might be triggered by the interaction of capsid proteins with ribosomes. Binding of ribosomes would release the genomic RNA since the same region is genomic RNA-binding and ribosome-binding. Specifically inhibits interleukin-1 receptor-associated kinase 1/IRAK1-dependent signaling during viral entry, representing a means by which the alphaviruses may evade innate immune detection and activation prior to viral gene expression. Its function is as follows. Provides the signal sequence for the translocation of the precursor of protein E3/E2 to the host endoplasmic reticulum. Furin-cleaved E3 remains associated with spike glycoprotein E1 and mediates pH protection of the latter during the transport via the secretory pathway. After virion release from the host cell, the assembly protein E3 is gradually released in the extracellular space. Functionally, plays a role in viral attachment to target host cell, by binding to the cell receptor MXRA8. Synthesized as a p62 precursor which is processed by furin at the cell membrane just before virion budding, giving rise to E2-E1 heterodimer. The p62-E1 heterodimer is stable, whereas E2-E1 is unstable and dissociate at low pH. p62 is processed at the last step, presumably to avoid E1 fusion activation before its final export to cell surface. E2 C-terminus contains a transitory transmembrane that would be disrupted by palmitoylation, resulting in reorientation of the C-terminal tail from lumenal to cytoplasmic side. This step is critical since E2 C-terminus is involved in budding by interacting with capsid proteins. This release of E2 C-terminus in cytoplasm occurs lately in protein export, and precludes premature assembly of particles at the endoplasmic reticulum membrane. Acts as a viroporin that participates in virus glycoprotein processing and transport to the plasma membrane, cell permeabilization and budding of viral particles. Disrupts the calcium homeostasis of the cell, probably at the endoplasmic reticulum level. This leads to cytoplasmic calcium elevation. Because of its lipophilic properties, the 6K protein is postulated to influence the selection of lipids that interact with the transmembrane domains of the glycoproteins, which, in turn, affects the deformability of the bilayer required for the extreme curvature that occurs as budding proceeds. Present in low amount in virions, about 3% compared to viral glycoproteins. In terms of biological role, class II viral fusion protein. Fusion activity is inactive as long as E1 is bound to E2 in mature virion. After virus attachment to target cell via host MXRA8 and endocytosis, acidification of the endosome induce dissociation of E1/E2 heterodimer and concomitant trimerization of the E1 subunits. This E1 trimer is fusion active, and promotes release of viral nucleocapsid in cytoplasm after endosome and viral membrane fusion. Efficient fusion requires the presence of cholesterol and sphingolipid in the target membrane. This is Structural polyprotein from Anopheles (Human).